A 70-amino-acid chain; its full sequence is Flexible pilin (70 aa).

Positions 1-24 (MPNFFRNGCIALVGSVAAMGAAHA) are cleaved as a signal peptide.

In terms of assembly, homomer.

The protein localises to the fimbrium. Fimbriae (also called pili) are polar filaments radiating from the surface of the bacterium to a length of 0.5-1.5 micrometers and numbering 100-300 per cell. They enable bacteria to colonize the epithelium of specific host organs. Flexible pili possess hemagglutinating function. This chain is Flexible pilin (aerA), found in Aeromonas hydrophila.